The sequence spans 929 residues: Dual serine/threonine and tyrosine protein kinase (929 aa).

Over residues 1–14 (MEGDGVPWGSEPVS) the composition is skewed to low complexity. Positions 1-21 (MEGDGVPWGSEPVSGPGPGGG) are disordered. Coiled-coil stretches lie at residues 189–215 (EEDL…MHHA) and 395–431 (RKKE…KEEL). One can recognise a Protein kinase domain in the interval 652–906 (PKLGQELGRG…PLLGIVQPML (255 aa)). ATP-binding positions include 658 to 666 (LGRGQYGVV) and K681. D777 serves as the catalytic Proton acceptor.

It belongs to the protein kinase superfamily. Ser/Thr protein kinase family. Predominantly expressed in skeletal muscle and testis. Expressed in basolateral and apical membranes of all tubular epithelia. Expressed in thin ascending limb of the loop of Henle and the distal convoluted tubule. Expressed in all layers of transitional ureteric epithelium and in the ureteric smooth-muscle cells. Weakly expressed in heart, brain, placenta, kidney, pancreas, spleen, thymus, prostate, uterus, small intestine, white blood cells, stomach, spinal cord and adrenal gland. Is widely distributed in the CNS. Also detected in several tumor cell lines. Expressed in the skin.

The protein resides in the cytoplasm. Its subcellular location is the cell membrane. The protein localises to the apical cell membrane. It localises to the basolateral cell membrane. It is found in the cell junction. The catalysed reaction is L-seryl-[protein] + ATP = O-phospho-L-seryl-[protein] + ADP + H(+). The enzyme catalyses L-threonyl-[protein] + ATP = O-phospho-L-threonyl-[protein] + ADP + H(+). It carries out the reaction L-tyrosyl-[protein] + ATP = O-phospho-L-tyrosyl-[protein] + ADP + H(+). Functionally, acts as a positive regulator of ERK phosphorylation downstream of fibroblast growth factor-receptor activation. Involved in the regulation of both caspase-dependent apoptosis and caspase-independent cell death. In the skin, it plays a predominant role in suppressing caspase-dependent apoptosis in response to UV stress in a range of dermal cell types. The polypeptide is Dual serine/threonine and tyrosine protein kinase (DSTYK) (Homo sapiens (Human)).